We begin with the raw amino-acid sequence, 36 residues long: Protein YmgL (36 aa).

This chain is Protein YmgL, found in Escherichia coli (strain K12).